The sequence spans 885 residues: Protein kintoun (885 aa).

6 disordered regions span residues 208–235 (LSKN…ADAG), 371–390 (LSRE…PVED), 607–636 (ELQQ…ESAC), 644–663 (EHHE…QRSY), 781–806 (RRLS…QPAH), and 819–871 (NNNH…MMFE). Over residues 213-232 (TAEEKEPHPLEHMYPKKPEA) the composition is skewed to basic and acidic residues. Serine 376 carries the post-translational modification Phosphoserine. Positions 612-629 (HHQKKLNKKQRKRNKKQR) are enriched in basic residues. Serine 784 carries the phosphoserine modification. A compositionally biased stretch (basic and acidic residues) spans 824–837 (HVKDNKKQSLHDSG). Residues 842–855 (NGSINNKNNHSNEN) show a composition bias toward low complexity.

It belongs to the PIH1 family. Kintoun subfamily. Interacts with Pp1alpha-96A, Pp1-87B, Pp1-13C and flw.

It localises to the cytoplasm. In terms of biological role, required for cytoplasmic pre-assembly of axonemal dyneins, thereby playing a central role in motility in cilia and flagella. Involved in pre-assembly of dynein arm complexes in the cytoplasm before intraflagellar transport loads them for the ciliary compartment. The polypeptide is Protein kintoun (Drosophila mojavensis (Fruit fly)).